The primary structure comprises 728 residues: LPS-assembly protein LptD (728 aa).

The signal sequence occupies residues 1–21 (MSALPGFTLAALLLNVSLAEA).

The protein belongs to the LptD family. As to quaternary structure, component of the lipopolysaccharide transport and assembly complex. Interacts with LptE and LptA.

Its subcellular location is the cell outer membrane. Together with LptE, is involved in the assembly of lipopolysaccharide (LPS) at the surface of the outer membrane. In Thiobacillus denitrificans (strain ATCC 25259 / T1), this protein is LPS-assembly protein LptD.